The following is a 646-amino-acid chain: Threonine--tRNA ligase (646 aa).

The TGS domain maps to 1-61 (MIKITFPDGN…NEDSNFEIVT (61 aa)). The catalytic stretch occupies residues 242 to 540 (DHRKLGRELD…LIEVYKGAFP (299 aa)). Zn(2+)-binding residues include Cys336, His387, and His517.

It belongs to the class-II aminoacyl-tRNA synthetase family. As to quaternary structure, homodimer. The cofactor is Zn(2+).

Its subcellular location is the cytoplasm. It catalyses the reaction tRNA(Thr) + L-threonine + ATP = L-threonyl-tRNA(Thr) + AMP + diphosphate + H(+). In terms of biological role, catalyzes the attachment of threonine to tRNA(Thr) in a two-step reaction: L-threonine is first activated by ATP to form Thr-AMP and then transferred to the acceptor end of tRNA(Thr). Also edits incorrectly charged L-seryl-tRNA(Thr). This is Threonine--tRNA ligase from Lactococcus lactis subsp. lactis (strain IL1403) (Streptococcus lactis).